The sequence spans 215 residues: S-crystallin 2 (215 aa).

Residues 2 to 80 form the GST N-terminal domain; sequence PSYTLHYFNH…YLAREFGFHG (79 aa). The region spanning 82-215 is the GST C-terminal domain; that stretch reads NNLDMARVDF…YLKSRSSTDF (134 aa).

Belongs to the GST superfamily. In terms of tissue distribution, lens.

In terms of biological role, S-crystallins are structural components of squids and octopi eye lens. Contains relatively little GST activity (1/1000 of that of mammalian GST enzyme). In Octopus vulgaris (Common octopus), this protein is S-crystallin 2 (OCTS2).